The following is a 598-amino-acid chain: MTDSTTHDREMSAWQTHDHLDDPVIGELRNRFGPEAFSVQPTRTGMPVVWVKREQLLEVMAFLRQLPKPYVMLFDLHGMDERLRTHRQGLPAADFSVFYHLISIDRNRDIMLKVALAEQDLHLPTVTRLFPNANWYERETFDLFGITFDGHPHLTRLLMPRTWQGHPLRKDYPARATEFDPFELTRQKQDLEMESLKFRPEEWGMQRGTANEDFMFLNLGPNHPSSHGAFRIVLQLDGEDIVDCVPDIGYHHRGAEKMGERQSWHSYIPYTDRIEYLGGCVNEMPYVLAVEKLAGIEVPERVKVIRVMLSELFRINSHLLYISTFIQDVGAMTPVFFAFTDRQKIYDIVEAVTGFRMHPAWFRIGGVAHDLPKGWDRLLREFLEWMPKRLDSYVKAALHNSILKGRSIGVAAYGAKDALAWGTTGAGLRATGIAFDVRKWRPYSGYENFEFEVPTASNGDCYDRVMLKVEEIRQSLRILQQCLKNMPEGPFKADHPLTTPPPKERTLQHIDTLINHFLQVSWGPVMPANESFQMVEATKGINSYYLTSDGGTMSYRTRIRTPSYAHLQQIPSVIRGCLVSDLIVYLGSIDFVMSDVDR.

The segment at 1–189 (MTDSTTHDRE…DPFELTRQKQ (189 aa)) is NADH dehydrogenase I subunit C. Residues 213–598 (DFMFLNLGPN…IDFVMSDVDR (386 aa)) form an NADH dehydrogenase I subunit D region.

The protein in the N-terminal section; belongs to the complex I 30 kDa subunit family. It in the C-terminal section; belongs to the complex I 49 kDa subunit family. As to quaternary structure, NDH-1 is composed of 13 different subunits. Subunits NuoB, CD, E, F, and G constitute the peripheral sector of the complex.

It is found in the cell inner membrane. It carries out the reaction a quinone + NADH + 5 H(+)(in) = a quinol + NAD(+) + 4 H(+)(out). Functionally, NDH-1 shuttles electrons from NADH, via FMN and iron-sulfur (Fe-S) centers, to quinones in the respiratory chain. The immediate electron acceptor for the enzyme in this species is believed to be ubiquinone. Couples the redox reaction to proton translocation (for every two electrons transferred, four hydrogen ions are translocated across the cytoplasmic membrane), and thus conserves the redox energy in a proton gradient. This chain is NADH-quinone oxidoreductase subunit C/D, found in Edwardsiella ictaluri (strain 93-146).